Here is a 259-residue protein sequence, read N- to C-terminus: Global transcriptional regulator CodY (259 aa).

The segment at 1-155 is GAF domain; sequence MDLLTRTRKI…GATVVGMEIL (155 aa). Residues 203–222 constitute a DNA-binding region (H-T-H motif); that stretch reads ASKIADRVGITRSVIVNALR. Ser215 is modified (phosphoserine).

The protein belongs to the CodY family.

Its subcellular location is the cytoplasm. In terms of biological role, DNA-binding global transcriptional regulator which is involved in the adaptive response to starvation and acts by directly or indirectly controlling the expression of numerous genes in response to nutrient availability. During rapid exponential growth, CodY is highly active and represses genes whose products allow adaptation to nutrient depletion. The sequence is that of Global transcriptional regulator CodY from Shouchella clausii (strain KSM-K16) (Alkalihalobacillus clausii).